Reading from the N-terminus, the 288-residue chain is Beta-lactamase CARB-3 (288 aa).

Positions 1 to 17 are cleaved as a signal peptide; that stretch reads MKFLLAFSLLIPSVVFA. Serine 65 (acyl-ester intermediate) is an active-site residue. Cysteine 72 and cysteine 118 are disulfide-bonded. Substrate is bound at residue 229 to 231; it reads RSG.

The protein belongs to the class-A beta-lactamase family.

It carries out the reaction a beta-lactam + H2O = a substituted beta-amino acid. In terms of biological role, hydrolyzes both carbenicillin and oxacillin. The polypeptide is Beta-lactamase CARB-3 (carB3) (Pseudomonas aeruginosa).